The primary structure comprises 160 residues: Ribosome-binding factor A (160 aa).

The span at K112–E122 shows a compositional bias: basic and acidic residues. The tract at residues K112–K160 is disordered. The segment covering E141–K160 has biased composition (acidic residues).

Belongs to the RbfA family. As to quaternary structure, monomer. Binds 30S ribosomal subunits, but not 50S ribosomal subunits or 70S ribosomes.

The protein resides in the cytoplasm. One of several proteins that assist in the late maturation steps of the functional core of the 30S ribosomal subunit. Associates with free 30S ribosomal subunits (but not with 30S subunits that are part of 70S ribosomes or polysomes). Required for efficient processing of 16S rRNA. May interact with the 5'-terminal helix region of 16S rRNA. This chain is Ribosome-binding factor A, found in Streptomyces coelicolor (strain ATCC BAA-471 / A3(2) / M145).